Reading from the N-terminus, the 203-residue chain is MTPPMCSNSFFNHSSSIDHDSLPTKIVAGSSVSSFFCFLLEDSSSSSSSASSDLRFLSLDSSFSLSLSEDEDEDESELEDSFDSSFLVSSFSSSSSSSEEESEEEEEESLDSSFLVSASLSLSEDDEEEDSESEDEDEDEDSDSDSDSDSDSDEDEDEDEDSEEEEETALAFSSLACLEALTSFLLPFTLVVLAILFYPAWVE.

Disordered regions lie at residues 65–84 (LSLSEDEDEDESELEDSFDS) and 92–170 (SSSS…ETAL). Acidic residues-rich tracts occupy residues 68 to 82 (SEDEDEDESELEDSF) and 98 to 110 (SEEESEEEEEESL). The span at 111 to 122 (DSSFLVSASLSL) shows a compositional bias: low complexity. Acidic residues predominate over residues 123–168 (SEDDEEEDSESEDEDEDEDSDSDSDSDSDSDEDEDEDEDSEEEEET). A helical membrane pass occupies residues 182–202 (TSFLLPFTLVVLAILFYPAWV).

It is found in the membrane. This is an uncharacterized protein from Saccharomyces cerevisiae (strain ATCC 204508 / S288c) (Baker's yeast).